The primary structure comprises 268 residues: 3-deoxy-manno-octulosonate cytidylyltransferase (268 aa).

It belongs to the KdsB family.

Its subcellular location is the cytoplasm. The catalysed reaction is 3-deoxy-alpha-D-manno-oct-2-ulosonate + CTP = CMP-3-deoxy-beta-D-manno-octulosonate + diphosphate. The protein operates within nucleotide-sugar biosynthesis; CMP-3-deoxy-D-manno-octulosonate biosynthesis; CMP-3-deoxy-D-manno-octulosonate from 3-deoxy-D-manno-octulosonate and CTP: step 1/1. Its pathway is bacterial outer membrane biogenesis; lipopolysaccharide biosynthesis. Activates KDO (a required 8-carbon sugar) for incorporation into bacterial lipopolysaccharide in Gram-negative bacteria. This Ralstonia pickettii (strain 12J) protein is 3-deoxy-manno-octulosonate cytidylyltransferase.